The following is a 479-amino-acid chain: Ribosomal RNA small subunit methyltransferase F (479 aa).

S-adenosyl-L-methionine is bound by residues 125 to 131 (AAAPGSK), Glu149, Asp176, and Asp194. The active-site Nucleophile is Cys247.

This sequence belongs to the class I-like SAM-binding methyltransferase superfamily. RsmB/NOP family.

It localises to the cytoplasm. The enzyme catalyses cytidine(1407) in 16S rRNA + S-adenosyl-L-methionine = 5-methylcytidine(1407) in 16S rRNA + S-adenosyl-L-homocysteine + H(+). Functionally, specifically methylates the cytosine at position 1407 (m5C1407) of 16S rRNA. This Salmonella agona (strain SL483) protein is Ribosomal RNA small subunit methyltransferase F.